A 247-amino-acid polypeptide reads, in one-letter code: Small ribosomal subunit protein uS3 (247 aa).

The KH type-2 domain occupies 39-109 (IRSMIRSFPE…KVQIKVKEIK (71 aa)). Residues 224-247 (RSRRESGQKSDELVRDERTHAERG) form a disordered region. The segment covering 227-247 (RESGQKSDELVRDERTHAERG) has biased composition (basic and acidic residues).

Belongs to the universal ribosomal protein uS3 family. Part of the 30S ribosomal subunit. Forms a tight complex with proteins S10 and S14.

Its function is as follows. Binds the lower part of the 30S subunit head. Binds mRNA in the 70S ribosome, positioning it for translation. The polypeptide is Small ribosomal subunit protein uS3 (Treponema pallidum (strain Nichols)).